The following is a 393-amino-acid chain: Acyl-homoserine-lactone synthase OpaM (393 aa).

Belongs to the LuxM / VanM family.

It catalyses the reaction a fatty acyl-[ACP] + S-adenosyl-L-methionine = an N-acyl-L-homoserine lactone + S-methyl-5'-thioadenosine + holo-[ACP] + H(+). This Vibrio parahaemolyticus serotype O3:K6 (strain RIMD 2210633) protein is Acyl-homoserine-lactone synthase OpaM (opaM).